The chain runs to 210 residues: Fimbriae Z protein (210 aa).

The region spanning Ser-5–Leu-121 is the Response regulatory domain. Residue Asp-56 is modified to 4-aspartylphosphate. The region spanning Asn-143–Glu-208 is the HTH luxR-type domain. The H-T-H motif DNA-binding region spans Asn-167–Ser-186.

The protein localises to the cytoplasm. The sequence is that of Fimbriae Z protein (fimZ) from Escherichia coli O157:H7.